Reading from the N-terminus, the 240-residue chain is Ribonuclease 3 (240 aa).

In terms of domain architecture, RNase III spans 9–141; it reads VEEFQKKTGI…LLAAIYLDQG (133 aa). Glutamate 54 is a Mg(2+) binding site. The active site involves aspartate 58. Residues aspartate 127 and glutamate 130 each contribute to the Mg(2+) site. Residue glutamate 130 is part of the active site. The DRBM domain occupies 168-237; that stretch reads DYKTALQEIV…ARIAYEKLLK (70 aa).

The protein belongs to the ribonuclease III family. Homodimer. Requires Mg(2+) as cofactor.

The protein localises to the cytoplasm. The enzyme catalyses Endonucleolytic cleavage to 5'-phosphomonoester.. Digests double-stranded RNA. Involved in the processing of primary rRNA transcript to yield the immediate precursors to the large and small rRNAs (23S and 16S). Processes some mRNAs, and tRNAs when they are encoded in the rRNA operon. Processes pre-crRNA and tracrRNA of type II CRISPR loci if present in the organism. The protein is Ribonuclease 3 of Thermotoga petrophila (strain ATCC BAA-488 / DSM 13995 / JCM 10881 / RKU-1).